We begin with the raw amino-acid sequence, 335 residues long: SAM pointed domain-containing Ets transcription factor (335 aa).

Low complexity predominate over residues 1–20; it reads MGSASPGLSSVSPSHLLLPP. 2 disordered regions span residues 1–25 and 75–100; these read MGSA…TVSR and AKAP…DSQA. Residues 129 to 213 form the PNT domain; the sequence is EVLKDIETAC…AHLDIWKSAA (85 aa). The ETS DNA-binding region spans 249-332; sequence IHLWQFLKEL…ISQRLVYQFV (84 aa).

It belongs to the ETS family. In terms of assembly, interacts with the DNA-binding domain of the androgen receptor. Interacts with NKX3-1. In terms of tissue distribution, expressed in a very restricted set of primarily hormone-regulated epithelial tissues with particularly high expression in the prostate gland. Significantly lower expression is seen in other hormone regulated tissues such as mammary gland, salivary gland, and ovary. Expressed in prostate carcinoma cells.

The protein resides in the nucleus. In terms of biological role, may function as an androgen-independent transactivator of the prostate-specific antigen (PSA) promoter. Binds to 5'-GGAT-3' DNA sequences. May play a role in the regulation of the prostate gland and/or prostate cancer development. Acts as a transcriptional activator for SERPINB5 promoter. The sequence is that of SAM pointed domain-containing Ets transcription factor (SPDEF) from Homo sapiens (Human).